Here is a 1374-residue protein sequence, read N- to C-terminus: Ribonuclease 3 (1374 aa).

Disordered regions lie at residues 1–95 (MMQG…PLPP), 130–406 (PPVP…EEEE), and 452–497 (LGSR…SSSS). Positions 59-68 (PSTTFSNSPA) are enriched in polar residues. Pro residues-rich tracts occupy residues 70 to 95 (NFLPPRPDFVPFPPPMPPSAQGPLPP) and 145 to 160 (MMPPPSMPHPPPPPVM). The segment covering 182–202 (FNSFQNNPSSFLPSANNSSSP) has biased composition (low complexity). Basic and acidic residues-rich tracts occupy residues 216-289 (PSER…ERER) and 298-313 (RRSPSLERSYKKEYKR). Ser355 and Ser373 each carry phosphoserine. Basic and acidic residues predominate over residues 364–399 (RWEEEKDRWSDNQSSGKDKNYTSIKEKEPEETMPDK). Residues 390–1365 (KEPEETMPDK…RWEREHQERE (976 aa)) are necessary for interaction with DGCR8 and pri-miRNA processing activity. A compositionally biased stretch (acidic residues) spans 475–491 (EDLESSSESECESDEDS). Zn(2+)-binding residues include Cys536, Cys538, His549, Cys561, His609, Cys676, and His680. RNase III domains follow at residues 876 to 1056 (LMHL…LEGS) and 1107 to 1233 (LTEF…IDKD). Glu969 is a Mg(2+) binding site. His1026 serves as a coordination point for Zn(2+). Residues Asn1042, Glu1045, Glu1147, Asp1219, and Glu1222 each contribute to the Mg(2+) site. The region spanning 1260–1334 (DPKSQLQQCC…AMDALEKYNF (75 aa)) is the DRBM domain.

The protein belongs to the ribonuclease III family. As to quaternary structure, component of the microprocessor complex, or pri-miRNA processing protein complex, which is composed of DROSHA and DGCR8. The microprocessor complex is a heterotrimer; each of the two DROSHA RNase III domains binds one DGCR8 (via C-terminal region). Interacts with SP1 and SNIP1. Interacts with SRRT/ARS2. Interacts with CPSF3 and ISY1; this interaction is in an RNA dependent manner. Interacts with PUS10; interaction promotes pri-miRNAs processing. Mg(2+) is required as a cofactor. Requires Mn(2+) as cofactor. Post-translationally, degraded by autophagy in response to neuronal activity in motor neurons. As to expression, ubiquitous.

The protein localises to the nucleus. The protein resides in the nucleolus. It is found in the cytoplasm. It carries out the reaction Endonucleolytic cleavage to 5'-phosphomonoester.. Functionally, ribonuclease III double-stranded (ds) RNA-specific endoribonuclease that is involved in the initial step of microRNA (miRNA) biogenesis. Component of the microprocessor complex that is required to process primary miRNA transcripts (pri-miRNAs) to release precursor miRNA (pre-miRNA) in the nucleus. Within the microprocessor complex, DROSHA cleaves the 3' and 5' strands of a stem-loop in pri-miRNAs (processing center 11 bp from the dsRNA-ssRNA junction) to release hairpin-shaped pre-miRNAs that are subsequently cut by the cytoplasmic DICER to generate mature miRNAs. Involved also in pre-rRNA processing. Cleaves double-strand RNA and does not cleave single-strand RNA. Involved in the formation of GW bodies. Plays a role in growth homeostasis in response to autophagy in motor neurons. The polypeptide is Ribonuclease 3 (DROSHA) (Homo sapiens (Human)).